A 255-amino-acid chain; its full sequence is Homeobox protein Hox-D4 (255 aa).

The interval 31 to 127 (EQGADYYGGG…PKQPPSGTAL (97 aa)) is disordered. Pro residues predominate over residues 94–107 (EPCPAPPAPPPAPL). Residues 133-138 (VYPWMK) carry the Antp-type hexapeptide motif. The segment at residues 154 to 213 (PKRSRTAYTRQQVLELEKEFHFNRYLTRRRRIEIAHTLCLSERQIKIWFQNRRMKWKKDH) is a DNA-binding region (homeobox). The disordered stretch occupies residues 212–255 (DHKLPNTKGRSSSSSSSSSCSSSVAPSQHLQPMAKDHHTDLTTL). The span at 222–234 (SSSSSSSSSCSSS) shows a compositional bias: low complexity. The span at 245-255 (AKDHHTDLTTL) shows a compositional bias: basic and acidic residues.

Belongs to the Antp homeobox family. Deformed subfamily. As to quaternary structure, forms a DNA-binding heterodimer with transcription factor PBX1.

It localises to the nucleus. Sequence-specific transcription factor which is part of a developmental regulatory system that provides cells with specific positional identities on the anterior-posterior axis. In Homo sapiens (Human), this protein is Homeobox protein Hox-D4 (HOXD4).